Reading from the N-terminus, the 82-residue chain is uncharacterized protein (82 aa).

This is an uncharacterized protein from Treponema pallidum (strain Nichols).